The following is a 41-amino-acid chain: Giant hemoglobin AI chain (41 aa).

Positions Asp-2–Pro-41 constitute a Globin domain.

This sequence belongs to the globin family. As to quaternary structure, giant hemoglobin is composed of four heme-containing chains (AI to AIV), and two linker chains (AV and AVI).

The protein is Giant hemoglobin AI chain of Lamellibrachia sp. (Deep-sea giant tube worm).